We begin with the raw amino-acid sequence, 446 residues long: Alpha-1,6-mannosyl-glycoprotein 2-beta-N-acetylglucosaminyltransferase (446 aa).

Over 1-9 (MRFRIYKRK) the chain is Cytoplasmic. The chain crosses the membrane as a helical; Signal-anchor for type II membrane protein span at residues 10–29 (VLILTFVVAACGFVLWSSNG). Residues 30–446 (RQRKNEALAP…ELCKSYRRLQ (417 aa)) lie on the Lumenal side of the membrane. N-linked (GlcNAc...) asparagine glycosylation is found at asparagine 69 and asparagine 86. Substrate contacts are provided by residues 123–127 (QVHNR) and aspartate 154. A disulfide bond links cysteine 196 and cysteine 210. 229-233 (QTKHH) serves as a coordination point for substrate. Aspartate 261 lines the Mn(2+) pocket. A disulfide bridge links cysteine 283 with cysteine 286. Arginine 298 contributes to the substrate binding site. 3 disulfides stabilise this stretch: cysteine 334–cysteine 357, cysteine 339–cysteine 439, and cysteine 378–cysteine 386. Histidine 374 provides a ligand contact to Mn(2+).

The protein belongs to the glycosyltransferase 16 (GT16) protein family. Homodimer. It depends on Mn(2+) as a cofactor.

It localises to the golgi apparatus membrane. The enzyme catalyses an N(4)-{beta-D-GlcNAc-(1-&gt;2)-alpha-D-Man-(1-&gt;3)-[alpha-D-Man-(1-&gt;6)]-beta-D-Man-(1-&gt;4)-beta-D-GlcNAc-(1-&gt;4)-beta-D-GlcNAc}-L-asparaginyl-[protein] + UDP-N-acetyl-alpha-D-glucosamine = N(4)-{beta-D-GlcNAc-(1-&gt;2)-alpha-D-Man-(1-&gt;3)-[beta-D-GlcNAc-(1-&gt;2)-alpha-D-Man-(1-&gt;6)]-beta-D-Man-(1-&gt;4)-beta-D-GlcNAc-(1-&gt;4)-beta-D-GlcNAc}-L-asparaginyl-[protein] + UDP + H(+). It participates in protein modification; protein glycosylation. Its function is as follows. Plays an essential role in protein N-glycosylation. Catalyzes the transfer of N-acetylglucosamine (GlcNAc) onto the free terminal mannose moiety in the core structure of the nascent N-linked glycan chain, giving rise to the second branch in complex glycans. The polypeptide is Alpha-1,6-mannosyl-glycoprotein 2-beta-N-acetylglucosaminyltransferase (MGAT2) (Sus scrofa (Pig)).